Reading from the N-terminus, the 260-residue chain is Carbonic anhydrase 2 (260 aa).

An N-acetylserine modification is found at serine 2. Serine 2 is subject to Phosphoserine. The Alpha-carbonic anhydrase domain maps to 3 to 259 (HHWGYGKHNG…LKGRQVKASF (257 aa)). Histidine 64 (proton donor/acceptor) is an active-site residue. The Zn(2+) site is built by histidine 94, histidine 96, and histidine 119. A phosphoserine mark is found at serine 165 and serine 172. 198 to 199 (TT) contributes to the substrate binding site.

The protein belongs to the alpha-carbonic anhydrase family. In terms of assembly, interacts with SLC4A4 and SLC26A6. Interaction with SLC4A7 regulates SLC4A7 transporter activity. Requires Zn(2+) as cofactor.

The protein resides in the cytoplasm. It localises to the cell membrane. It catalyses the reaction hydrogencarbonate + H(+) = CO2 + H2O. It carries out the reaction urea = cyanamide + H2O. Inhibited by acetazolamide. Catalyzes the reversible hydration of carbon dioxide. Can also hydrate cyanamide to urea. Involved in the regulation of fluid secretion into the anterior chamber of the eye. Essential for bone resorption and osteoclast differentiation. Contributes to intracellular pH regulation in the duodenal upper villous epithelium during proton-coupled peptide absorption. Stimulates the chloride-bicarbonate exchange activity of SLC26A6. This chain is Carbonic anhydrase 2 (CA2), found in Oryctolagus cuniculus (Rabbit).